A 424-amino-acid chain; its full sequence is Enolase (424 aa).

Gln164 is a (2R)-2-phosphoglycerate binding site. The active-site Proton donor is the Glu206. Asp243, Glu284, and Asp311 together coordinate Mg(2+). Residues Lys336, Arg365, Ser366, and Lys387 each contribute to the (2R)-2-phosphoglycerate site. Catalysis depends on Lys336, which acts as the Proton acceptor.

Belongs to the enolase family. It depends on Mg(2+) as a cofactor.

It is found in the cytoplasm. The protein localises to the secreted. The protein resides in the cell surface. It carries out the reaction (2R)-2-phosphoglycerate = phosphoenolpyruvate + H2O. The protein operates within carbohydrate degradation; glycolysis; pyruvate from D-glyceraldehyde 3-phosphate: step 4/5. In terms of biological role, catalyzes the reversible conversion of 2-phosphoglycerate (2-PG) into phosphoenolpyruvate (PEP). It is essential for the degradation of carbohydrates via glycolysis. This is Enolase from Wolbachia sp. subsp. Drosophila simulans (strain wRi).